The following is a 477-amino-acid chain: Glycogen synthase (477 aa).

An ADP-alpha-D-glucose-binding site is contributed by K15.

Belongs to the glycosyltransferase 1 family. Bacterial/plant glycogen synthase subfamily.

The catalysed reaction is [(1-&gt;4)-alpha-D-glucosyl](n) + ADP-alpha-D-glucose = [(1-&gt;4)-alpha-D-glucosyl](n+1) + ADP + H(+). It functions in the pathway glycan biosynthesis; glycogen biosynthesis. Functionally, synthesizes alpha-1,4-glucan chains using ADP-glucose. The sequence is that of Glycogen synthase from Mannheimia succiniciproducens (strain KCTC 0769BP / MBEL55E).